The sequence spans 257 residues: Gasdermin-like protein rcd-1-1 (257 aa).

This sequence belongs to the gasdermin family. As to quaternary structure, heterooligomer; the heterooligomer with rcd-1-2 forms a ring-shaped pore complex when inserted in the membrane.

It localises to the cytoplasm. The protein localises to the cell membrane. Its function is as follows. Gasdermin-like protein involved in heterokaryon incompatibility, a process that ensures that during spontaneous vegetative cell fusion, only compatible cells from the same colony survive (non-self-recognition). In N.crassa, the rcd-1 locus exists as 2 incompatible alleles, rcd-1-1 (this entry) and rcd-1-2 (AC P0DW10). During the allorecognition process, forms a heterooligomer with rcd-1-2, thereby forming a functional gasdermin-like complex that binds to membranes and forms pores, triggering cell death. Binds negatively charged phospholipids, such as cardiolipin and phosphatidylserine. Also binds to phosphoinositides, preferentially to phosphatidylinositol-3-phosphate (PtdIns-3-P), PtdIns-5-P and PtdIns-3,5-P2. In Neurospora crassa (strain ATCC 24698 / 74-OR23-1A / CBS 708.71 / DSM 1257 / FGSC 987), this protein is Gasdermin-like protein rcd-1-1.